Here is a 574-residue protein sequence, read N- to C-terminus: UvrABC system protein C (574 aa).

The GIY-YIG domain maps to 12–92 (KKPGVYIFKN…IYIHKPKYNI (81 aa)). The UVR domain occupies 200–235 (EEVKNYLQKAMMDYAKIKNYEKAAQMRDTLFKLENL).

It belongs to the UvrC family. As to quaternary structure, interacts with UvrB in an incision complex.

The protein localises to the cytoplasm. The UvrABC repair system catalyzes the recognition and processing of DNA lesions. UvrC both incises the 5' and 3' sides of the lesion. The N-terminal half is responsible for the 3' incision and the C-terminal half is responsible for the 5' incision. This is UvrABC system protein C from Petrotoga mobilis (strain DSM 10674 / SJ95).